Reading from the N-terminus, the 319-residue chain is Putative peptide permease protein BOV_A0351 (319 aa).

The next 6 helical transmembrane spans lie at 9–29 (LLIGLGMLLALTILIFVLLQL), 102–122 (LLLMAAGLAIAIVIGVTTGII), 138–158 (LALLGISSPAFLTALLGLYVF), 182–202 (LLRHLALPALVLSIGHAALIM), 242–262 (LPVVTLIGSTIGLAVGGAIFI), and 284–304 (YPVIMGATLVIGACVIIVNIL). Positions 98–305 (IGPTLLLMAA…ACVIIVNILT (208 aa)) constitute an ABC transmembrane type-1 domain.

The protein belongs to the binding-protein-dependent transport system permease family. As to quaternary structure, the complex is composed of two ATP-binding proteins (BOV_A0347 and BOV_A0348), two transmembrane proteins (BOV_A0350 and BOV_A0351) and a solute-binding protein (BOV_A0352).

The protein resides in the cell inner membrane. Probably part of an ABC transporter complex that could be involved in peptide import. Probably responsible for the translocation of the substrate across the membrane. The sequence is that of Putative peptide permease protein BOV_A0351 from Brucella ovis (strain ATCC 25840 / 63/290 / NCTC 10512).